The chain runs to 525 residues: Phosphoenolpyruvate carboxykinase (ATP) 1 (525 aa).

3 residues coordinate substrate: Arg55, Tyr190, and Lys196. ATP-binding positions include Lys196, His215, and 231 to 239; that span reads GLSGTGKTT. The Mn(2+) site is built by Lys196 and His215. Residue Asp252 coordinates Mn(2+). ATP-binding residues include Glu280, Arg317, and Thr442. Arg317 is a substrate binding site.

This sequence belongs to the phosphoenolpyruvate carboxykinase (ATP) family. The cofactor is Mn(2+).

The protein localises to the cytoplasm. It catalyses the reaction oxaloacetate + ATP = phosphoenolpyruvate + ADP + CO2. The protein operates within carbohydrate biosynthesis; gluconeogenesis. Functionally, involved in the gluconeogenesis. Catalyzes the conversion of oxaloacetate (OAA) to phosphoenolpyruvate (PEP) through direct phosphoryl transfer between the nucleoside triphosphate and OAA. This Moorella thermoacetica (strain ATCC 39073 / JCM 9320) protein is Phosphoenolpyruvate carboxykinase (ATP) 1.